The following is a 522-amino-acid chain: 2-isopropylmalate synthase (522 aa).

The region spanning Val5 to His267 is the Pyruvate carboxyltransferase domain. Positions 14, 202, 204, and 238 each coordinate Mn(2+). Positions Gln392–Val522 are regulatory domain.

The protein belongs to the alpha-IPM synthase/homocitrate synthase family. LeuA type 1 subfamily. Homodimer. It depends on Mn(2+) as a cofactor.

Its subcellular location is the cytoplasm. It carries out the reaction 3-methyl-2-oxobutanoate + acetyl-CoA + H2O = (2S)-2-isopropylmalate + CoA + H(+). It functions in the pathway amino-acid biosynthesis; L-leucine biosynthesis; L-leucine from 3-methyl-2-oxobutanoate: step 1/4. Its function is as follows. Catalyzes the condensation of the acetyl group of acetyl-CoA with 3-methyl-2-oxobutanoate (2-ketoisovalerate) to form 3-carboxy-3-hydroxy-4-methylpentanoate (2-isopropylmalate). In Shewanella baltica (strain OS185), this protein is 2-isopropylmalate synthase.